The chain runs to 249 residues: RNA-free ribonuclease P (249 aa).

The disordered stretch occupies residues 226–249 (NENEPEYENRDKSKEGSSGEIEFI). Basic and acidic residues predominate over residues 232-242 (YENRDKSKEGS).

This sequence belongs to the HARP family.

It carries out the reaction Endonucleolytic cleavage of RNA, removing 5'-extranucleotides from tRNA precursor.. Functionally, RNA-free RNase P that catalyzes the removal of the 5'-leader sequence from pre-tRNA to produce the mature 5'-terminus. This is RNA-free ribonuclease P from Methanosarcina barkeri (strain Fusaro / DSM 804).